Here is a 232-residue protein sequence, read N- to C-terminus: Thiamine import ATP-binding protein ThiQ (232 aa).

Residues 2–230 (LKLTDITWLY…KASASALLGI (229 aa)) form the ABC transporter domain. 32–39 (GPSGAGKS) is an ATP binding site.

It belongs to the ABC transporter superfamily. Thiamine importer (TC 3.A.1.19.1) family. The complex is composed of two ATP-binding proteins (ThiQ), two transmembrane proteins (ThiP) and a solute-binding protein (ThiB).

The protein resides in the cell inner membrane. It carries out the reaction thiamine(out) + ATP + H2O = thiamine(in) + ADP + phosphate + H(+). Part of the ABC transporter complex ThiBPQ involved in thiamine import. Responsible for energy coupling to the transport system. This chain is Thiamine import ATP-binding protein ThiQ, found in Escherichia coli O6:H1 (strain CFT073 / ATCC 700928 / UPEC).